The primary structure comprises 59 residues: Conotoxin Cl14.4 (59 aa).

Residues 1–19 form the signal peptide; the sequence is MKFLLFLSVALLLTSFIET. Residues 20 to 36 constitute a propeptide that is removed on maturation; it reads VTVNKAGMERPSRALVG. Ile58 carries the post-translational modification Isoleucine amide.

In terms of processing, contains 2 disulfide bonds. As to expression, expressed by the venom duct.

The protein localises to the secreted. This is Conotoxin Cl14.4 from Californiconus californicus (California cone).